The sequence spans 143 residues: Transcriptional regulator MraZ (143 aa).

2 consecutive SpoVT-AbrB domains span residues 5–47 and 76–119; these read EYHH…PIEE and AMES…SAER.

This sequence belongs to the MraZ family. As to quaternary structure, forms oligomers.

The protein localises to the cytoplasm. It is found in the nucleoid. This chain is Transcriptional regulator MraZ, found in Lactobacillus johnsonii (strain CNCM I-12250 / La1 / NCC 533).